We begin with the raw amino-acid sequence, 113 residues long: Ribonuclease P protein component (113 aa).

Belongs to the RnpA family. In terms of assembly, consists of a catalytic RNA component (M1 or rnpB) and a protein subunit.

The catalysed reaction is Endonucleolytic cleavage of RNA, removing 5'-extranucleotides from tRNA precursor.. RNaseP catalyzes the removal of the 5'-leader sequence from pre-tRNA to produce the mature 5'-terminus. It can also cleave other RNA substrates such as 4.5S RNA. The protein component plays an auxiliary but essential role in vivo by binding to the 5'-leader sequence and broadening the substrate specificity of the ribozyme. This Clavibacter michiganensis subsp. michiganensis (strain NCPPB 382) protein is Ribonuclease P protein component.